The sequence spans 438 residues: Probable 26S proteasome regulatory subunit rpn-6.1 (438 aa).

The span at Met1–Thr10 shows a compositional bias: basic and acidic residues. The interval Met1–Ser30 is disordered. The PCI domain maps to Asp239–Val408.

The protein belongs to the proteasome subunit S9 family. As to quaternary structure, component of the lid subcomplex of the 19S proteasome regulatory particle complex (also named PA700 complex). The 26S proteasome consists of a 20S proteasome core and two 19S regulatory subunits.

In terms of biological role, component of the lid subcomplex of the 26S proteasome, a multiprotein complex involved in the ATP-dependent degradation of ubiquitinated proteins. In the complex, rpn-6.1 is required for proteasome assembly. Plays a key role in increased proteasome activity in response to proteotoxic stress: induced by daf-16, promoting enhanced assembly of the 26S proteasome and higher proteasome activity, leading to extended lifespan. The chain is Probable 26S proteasome regulatory subunit rpn-6.1 from Caenorhabditis elegans.